The sequence spans 210 residues: Thymidylate kinase (210 aa).

10-17 (GLEGAGKS) is a binding site for ATP.

It belongs to the thymidylate kinase family.

The catalysed reaction is dTMP + ATP = dTDP + ADP. In terms of biological role, phosphorylation of dTMP to form dTDP in both de novo and salvage pathways of dTTP synthesis. This chain is Thymidylate kinase, found in Haemophilus influenzae (strain PittEE).